We begin with the raw amino-acid sequence, 454 residues long: Protein disulfide-isomerase TMX3 (454 aa).

A signal peptide spans 1–24 (MAAWKSWAALRLCATVVLLDMVVC). Residues 25–128 (KGFVEDLDES…KDDIIEFAHR (104 aa)) enclose the Thioredoxin domain. At 25-375 (KGFVEDLDES…TIVSIFKSSP (351 aa)) the chain is on the lumenal side. Residues cysteine 53 and cysteine 56 each act as nucleophile in the active site. A disulfide bridge links cysteine 53 with cysteine 56. Asparagine 258 and asparagine 313 each carry an N-linked (GlcNAc...) asparagine glycan. The helical transmembrane segment at 376 to 396 (LMGCFLFGLPLGVISIMCYGI) threads the bilayer. The Cytoplasmic portion of the chain corresponds to 397–454 (YTADTDGGYIEERYEVSKSENENQEQIEESKEQQEPSSGGSVVPTVQEPKDVLEKKKD). Residues 412-454 (VSKSENENQEQIEESKEQQEPSSGGSVVPTVQEPKDVLEKKKD) are disordered. Residues 444–454 (EPKDVLEKKKD) show a composition bias toward basic and acidic residues. Residues 451 to 454 (KKKD) carry the Di-lysine motif motif.

This sequence belongs to the protein disulfide isomerase family.

The protein localises to the endoplasmic reticulum membrane. The enzyme catalyses Catalyzes the rearrangement of -S-S- bonds in proteins.. Probable disulfide isomerase, which participates in the folding of proteins containing disulfide bonds. May act as a dithiol oxidase. Acts as a regulator of endoplasmic reticulum-mitochondria contact sites via its ability to regulate redox signals. This chain is Protein disulfide-isomerase TMX3 (TMX3), found in Pongo abelii (Sumatran orangutan).